We begin with the raw amino-acid sequence, 171 residues long: Co-chaperone protein HscB homolog (171 aa).

A J domain is found at 2–74; sequence NHFELFGLPL…ISRAEYLLVQ (73 aa).

The protein belongs to the HscB family. In terms of assembly, interacts with HscA and stimulates its ATPase activity.

Its function is as follows. Co-chaperone involved in the maturation of iron-sulfur cluster-containing proteins. Seems to help targeting proteins to be folded toward HscA. The chain is Co-chaperone protein HscB homolog from Vibrio atlanticus (strain LGP32) (Vibrio splendidus (strain Mel32)).